A 349-amino-acid polypeptide reads, in one-letter code: D-alanine--D-alanine ligase (349 aa).

An ATP-grasp domain is found at 133–335 (QVLESATTIP…YSVLIEELVS (203 aa)). An ATP-binding site is contributed by 163 to 218 (EEKLIYPVFVKPANMGSSVGISKAENRTDLKQAIALALKYDSRVLIEQGVDAREIE). 3 residues coordinate Mg(2+): aspartate 289, glutamate 302, and asparagine 304.

It belongs to the D-alanine--D-alanine ligase family. Mg(2+) is required as a cofactor. Requires Mn(2+) as cofactor.

The protein localises to the cytoplasm. The enzyme catalyses 2 D-alanine + ATP = D-alanyl-D-alanine + ADP + phosphate + H(+). Its pathway is cell wall biogenesis; peptidoglycan biosynthesis. In terms of biological role, cell wall formation. The chain is D-alanine--D-alanine ligase from Streptococcus mutans serotype c (strain ATCC 700610 / UA159).